The chain runs to 395 residues: ATP phosphoribosyltransferase regulatory subunit (395 aa).

Belongs to the class-II aminoacyl-tRNA synthetase family. HisZ subfamily. Heteromultimer composed of HisG and HisZ subunits.

It is found in the cytoplasm. It participates in amino-acid biosynthesis; L-histidine biosynthesis; L-histidine from 5-phospho-alpha-D-ribose 1-diphosphate: step 1/9. In terms of biological role, required for the first step of histidine biosynthesis. May allow the feedback regulation of ATP phosphoribosyltransferase activity by histidine. The polypeptide is ATP phosphoribosyltransferase regulatory subunit (Pseudomonas putida (strain ATCC 700007 / DSM 6899 / JCM 31910 / BCRC 17059 / LMG 24140 / F1)).